Consider the following 169-residue polypeptide: Ribosome maturation factor RimM (169 aa).

The PRC barrel domain maps to 94–167 (ENEFYFHEII…KITIEVMEGL (74 aa)).

It belongs to the RimM family. In terms of assembly, binds ribosomal protein uS19.

It is found in the cytoplasm. In terms of biological role, an accessory protein needed during the final step in the assembly of 30S ribosomal subunit, possibly for assembly of the head region. Essential for efficient processing of 16S rRNA. May be needed both before and after RbfA during the maturation of 16S rRNA. It has affinity for free ribosomal 30S subunits but not for 70S ribosomes. In Listeria welshimeri serovar 6b (strain ATCC 35897 / DSM 20650 / CCUG 15529 / CIP 8149 / NCTC 11857 / SLCC 5334 / V8), this protein is Ribosome maturation factor RimM.